Reading from the N-terminus, the 243-residue chain is Pyridoxine 5'-phosphate synthase (243 aa).

Asparagine 9 contacts 3-amino-2-oxopropyl phosphate. Position 11 to 12 (11 to 12) interacts with 1-deoxy-D-xylulose 5-phosphate; that stretch reads DH. Position 20 (arginine 20) interacts with 3-amino-2-oxopropyl phosphate. Histidine 45 serves as the catalytic Proton acceptor. Arginine 47 and histidine 52 together coordinate 1-deoxy-D-xylulose 5-phosphate. Glutamate 72 (proton acceptor) is an active-site residue. Threonine 102 is a binding site for 1-deoxy-D-xylulose 5-phosphate. Histidine 193 functions as the Proton donor in the catalytic mechanism. 3-amino-2-oxopropyl phosphate contacts are provided by residues glycine 194 and 215-216; that span reads GH.

Belongs to the PNP synthase family. As to quaternary structure, homooctamer; tetramer of dimers.

Its subcellular location is the cytoplasm. It carries out the reaction 3-amino-2-oxopropyl phosphate + 1-deoxy-D-xylulose 5-phosphate = pyridoxine 5'-phosphate + phosphate + 2 H2O + H(+). Its pathway is cofactor biosynthesis; pyridoxine 5'-phosphate biosynthesis; pyridoxine 5'-phosphate from D-erythrose 4-phosphate: step 5/5. Its function is as follows. Catalyzes the complicated ring closure reaction between the two acyclic compounds 1-deoxy-D-xylulose-5-phosphate (DXP) and 3-amino-2-oxopropyl phosphate (1-amino-acetone-3-phosphate or AAP) to form pyridoxine 5'-phosphate (PNP) and inorganic phosphate. The polypeptide is Pyridoxine 5'-phosphate synthase (Salmonella typhi).